A 258-amino-acid chain; its full sequence is Regulatory protein RecX (258 aa).

This sequence belongs to the RecX family.

Its subcellular location is the cytoplasm. In terms of biological role, modulates RecA activity. The sequence is that of Regulatory protein RecX from Streptococcus thermophilus (strain CNRZ 1066).